The primary structure comprises 362 residues: Serpentine receptor class epsilon-37 (362 aa).

Helical transmembrane passes span 29–49, 67–87, 127–147, 170–190, 204–224, 260–280, and 288–308; these read IFYV…YILV, IMMC…IVLI, IYFA…AVLA, IPIL…YQTT, IFIG…NLAW, LVVS…VLLF, and FFVH…SLTL.

Belongs to the nematode receptor-like protein sre family.

It is found in the membrane. The polypeptide is Serpentine receptor class epsilon-37 (sre-37) (Caenorhabditis elegans).